Consider the following 690-residue polypeptide: Peroxidase (690 aa).

The first 20 residues, Met-1–Leu-20, serve as a signal peptide directing secretion. Cys-100 and Cys-112 are disulfide-bonded. The active-site Proton acceptor is the His-185. Asn-310 carries N-linked (GlcNAc...) asparagine glycosylation. Cys-315 and Cys-324 are disulfide-bonded. Position 437 (His-437) interacts with heme b. 2 cysteine pairs are disulfide-bonded: Cys-536/Cys-592 and Cys-636/Cys-662.

The protein belongs to the peroxidase family. XPO subfamily. It depends on heme b as a cofactor.

It localises to the secreted. It carries out the reaction 2 a phenolic donor + H2O2 = 2 a phenolic radical donor + 2 H2O. Its function is as follows. Involved in the chorion hardening process, through protein cross-linking mediated by the formation of di- and tri-tyrosine bonds. This is Peroxidase (Pxd) from Drosophila melanogaster (Fruit fly).